The primary structure comprises 185 residues: Ribosome-recycling factor (185 aa).

Belongs to the RRF family.

It is found in the cytoplasm. Its function is as follows. Responsible for the release of ribosomes from messenger RNA at the termination of protein biosynthesis. May increase the efficiency of translation by recycling ribosomes from one round of translation to another. This is Ribosome-recycling factor from Pectobacterium atrosepticum (strain SCRI 1043 / ATCC BAA-672) (Erwinia carotovora subsp. atroseptica).